A 1158-amino-acid polypeptide reads, in one-letter code: ATP-dependent helicase/deoxyribonuclease subunit B (1158 aa).

It belongs to the helicase family. AddB/RexB type 2 subfamily. In terms of assembly, heterodimer of AddA and RexB. Mg(2+) is required as a cofactor.

In terms of biological role, the heterodimer acts as both an ATP-dependent DNA helicase and an ATP-dependent, dual-direction single-stranded exonuclease. Recognizes the chi site generating a DNA molecule suitable for the initiation of homologous recombination. This subunit has 5' -&gt; 3' nuclease activity but not helicase activity. The sequence is that of ATP-dependent helicase/deoxyribonuclease subunit B from Lactobacillus johnsonii (strain CNCM I-12250 / La1 / NCC 533).